Reading from the N-terminus, the 87-residue chain is NADH dehydrogenase [ubiquinone] 1 alpha subcomplex subunit 4-like 2 (87 aa).

The protein belongs to the complex I NDUFA4 subunit family.

This chain is NADH dehydrogenase [ubiquinone] 1 alpha subcomplex subunit 4-like 2 (NDUFA4L2), found in Bos taurus (Bovine).